Consider the following 50-residue polypeptide: Photosystem II reaction center protein M (50 aa).

A helical membrane pass occupies residues 6 to 26; sequence FGFVASLLFVGVPTIFLIGLF.

Belongs to the PsbM family. In terms of assembly, PSII is composed of 1 copy each of membrane proteins PsbA, PsbB, PsbC, PsbD, PsbE, PsbF, PsbH, PsbI, PsbJ, PsbK, PsbL, PsbM, PsbT, PsbX, PsbY, Psb30/Ycf12, peripheral proteins PsbO, CyanoQ (PsbQ), PsbU, PsbV and a large number of cofactors. It forms dimeric complexes.

The protein resides in the cellular thylakoid membrane. Its function is as follows. One of the components of the core complex of photosystem II (PSII). PSII is a light-driven water:plastoquinone oxidoreductase that uses light energy to abstract electrons from H(2)O, generating O(2) and a proton gradient subsequently used for ATP formation. It consists of a core antenna complex that captures photons, and an electron transfer chain that converts photonic excitation into a charge separation. This subunit is found at the monomer-monomer interface. The sequence is that of Photosystem II reaction center protein M from Prochlorococcus marinus (strain MIT 9215).